A 1073-amino-acid chain; its full sequence is Envelopment polyprotein (1073 aa).

A signal peptide spans 1 to 19 (MMKVIWFSSLICFVIQCSG). Over 20-453 (DSGPIICAGP…NPQCYPAKKW (434 aa)) the chain is Lumenal. A disulfide bridge connects residues C26 and C49. N-linked (GlcNAc...) asparagine; by host glycosylation is found at N33 and N63. 10 disulfide bridges follow: C143/C156, C180/C327, C206/C216, C258/C305, C266/C303, C274/C280, C287/C292, C349/C352, C356/C424, and C376/C381. A helical membrane pass occupies residues 454–474 (LFIIIVILLGYAGLMLLTNVL). Residues 475 to 521 (KAIGIWGSWVIAPVKLMFAIIKKLMRTVSCLMRKLMDRGRQVIHEEI) form a golgi retention signal region. Residues 475 to 535 (KAIGIWGSWV…EGNQDDVRIE (61 aa)) are Cytoplasmic-facing. Positions 536 to 562 (MARPRRVRHWMYSPVILTILAIGLAES) are internal signal sequence for glycoprotein C. 10 cysteine pairs are disulfide-bonded: C563/C604, C576/C586, C629/C725, C644/C841, C650/C698, C656/C705, C660/C687, C691/C696, C778/C793, and C809/C823. At 563–1036 (CDEMVHADSK…ALFGNGLSRW (474 aa)) the chain is on the lumenal side. A fusion loop region spans residues 650-656 (CRWAGDC). Residues 691–705 (CGGAACGCFNAAPSC) are fusion loop. Residues N853 and N914 are each glycosylated (N-linked (GlcNAc...) asparagine; by host). Disulfide bonds link C908/C978, C918/C921, and C943/C974. The N-linked (GlcNAc...) asparagine; by host glycan is linked to N936. The chain crosses the membrane as a helical span at residues 1037–1057 (ILGVIGVLLGGLALFFMIMSL). Topologically, residues 1058-1073 (FKLGTKQVFRSRTKLA) are cytoplasmic.

The protein belongs to the phlebovirus envelope glycoprotein family. Homodimer. Heterodimer with glycoprotein C. Homotrimer (postfusion). As to quaternary structure, heterodimer with glycoprotein N. Specific enzymatic cleavages in vivo yield mature proteins including glycoprotein C and glycoprotein N. In terms of processing, the cytoplasmic tail is Palmitoylated. Post-translationally, glycosylated. Palmitoylated.

The protein localises to the virion membrane. Its subcellular location is the host Golgi apparatus membrane. The protein resides in the host endoplasmic reticulum membrane. Its function is as follows. Structural component of the virion that interacts with glycoprotein C. It shields the hydrophobic fusion loops of the glycoprotein C, preventing premature fusion. The glycoprotein protrusions are arranged on an icosahedral lattice, with T=12 triangulation. They are able to attach the virion to the host cell receptor CD209/DC-SIGN and to promote fusion of membranes with the late endosome after clathrin-mediated endocytosis of the virion. Plays a role in the packaging of ribonucleoproteins during virus assembly. In terms of biological role, structural component of the virion that interacts with glycoprotein N. Acts as a class II fusion protein that is activated upon acidification and subsequent repositioning of the glycoprotein N. The glycoprotein protrusions are arranged on an icosahedral lattice, with T=12 triangulation. They are able to attach the virion to the host cell receptor CD209/DC-SIGN and to promote fusion of membranes with the late endosome after clathrin-mediated endocytosis of the virion. The protein is Envelopment polyprotein of Dabie bandavirus (Severe fever with thrombocytopenia virus).